The sequence spans 210 residues: MKKAILGKKVGMTQIFSEEGEVMPVTVVKAGPCSVVQKKVEDTDGYNAVQIGFEDKKENKTKKPEKGHFEKAGVNPKKHLTEFELESMENLEVGQELTVEQFEVGDQIDVTGTSKSKGFQGTIKRFKHSTGPKTHGSRFYRAPGSLGSMDISRVFKGQTLPGRMGGNTVTVQRLEVVDVDKENNLLLVKGAVPGPKKGLLKIVDSVKAKS.

The protein belongs to the universal ribosomal protein uL3 family. Part of the 50S ribosomal subunit. Forms a cluster with proteins L14 and L19.

One of the primary rRNA binding proteins, it binds directly near the 3'-end of the 23S rRNA, where it nucleates assembly of the 50S subunit. In Natranaerobius thermophilus (strain ATCC BAA-1301 / DSM 18059 / JW/NM-WN-LF), this protein is Large ribosomal subunit protein uL3.